The following is a 224-amino-acid chain: Phosphoribosylformylglycinamidine synthase subunit PurQ (224 aa).

A Glutamine amidotransferase type-1 domain is found at 2 to 224 (TVAVVRFGGS…DGQGILGAFA (223 aa)). The active-site Nucleophile is cysteine 85. Active-site residues include histidine 202 and glutamate 204.

As to quaternary structure, part of the FGAM synthase complex composed of 1 PurL, 1 PurQ and 2 PurS subunits.

Its subcellular location is the cytoplasm. The enzyme catalyses N(2)-formyl-N(1)-(5-phospho-beta-D-ribosyl)glycinamide + L-glutamine + ATP + H2O = 2-formamido-N(1)-(5-O-phospho-beta-D-ribosyl)acetamidine + L-glutamate + ADP + phosphate + H(+). It catalyses the reaction L-glutamine + H2O = L-glutamate + NH4(+). It participates in purine metabolism; IMP biosynthesis via de novo pathway; 5-amino-1-(5-phospho-D-ribosyl)imidazole from N(2)-formyl-N(1)-(5-phospho-D-ribosyl)glycinamide: step 1/2. Functionally, part of the phosphoribosylformylglycinamidine synthase complex involved in the purines biosynthetic pathway. Catalyzes the ATP-dependent conversion of formylglycinamide ribonucleotide (FGAR) and glutamine to yield formylglycinamidine ribonucleotide (FGAM) and glutamate. The FGAM synthase complex is composed of three subunits. PurQ produces an ammonia molecule by converting glutamine to glutamate. PurL transfers the ammonia molecule to FGAR to form FGAM in an ATP-dependent manner. PurS interacts with PurQ and PurL and is thought to assist in the transfer of the ammonia molecule from PurQ to PurL. The protein is Phosphoribosylformylglycinamidine synthase subunit PurQ of Halobacterium salinarum (strain ATCC 700922 / JCM 11081 / NRC-1) (Halobacterium halobium).